The sequence spans 317 residues: Beta-ketoacyl-[acyl-carrier-protein] synthase III (317 aa).

Active-site residues include cysteine 112 and histidine 244. An ACP-binding region spans residues 245-249; it reads QANLR. Residue asparagine 274 is part of the active site.

This sequence belongs to the thiolase-like superfamily. FabH family. In terms of assembly, homodimer.

The protein resides in the cytoplasm. The enzyme catalyses malonyl-[ACP] + acetyl-CoA + H(+) = 3-oxobutanoyl-[ACP] + CO2 + CoA. Its pathway is lipid metabolism; fatty acid biosynthesis. Functionally, catalyzes the condensation reaction of fatty acid synthesis by the addition to an acyl acceptor of two carbons from malonyl-ACP. Catalyzes the first condensation reaction which initiates fatty acid synthesis and may therefore play a role in governing the total rate of fatty acid production. Possesses both acetoacetyl-ACP synthase and acetyl transacylase activities. Its substrate specificity determines the biosynthesis of branched-chain and/or straight-chain of fatty acids. The chain is Beta-ketoacyl-[acyl-carrier-protein] synthase III from Shigella dysenteriae serotype 1 (strain Sd197).